Reading from the N-terminus, the 85-residue chain is ATP synthase subunit c (85 aa).

A run of 2 helical transmembrane segments spans residues 10–30 and 53–73; these read IAVGIIVGLASLGTAIGFALL and FIIAGLLDAVPMIGIVIALLF.

Belongs to the ATPase C chain family. As to quaternary structure, F-type ATPases have 2 components, F(1) - the catalytic core - and F(0) - the membrane proton channel. F(1) has five subunits: alpha(3), beta(3), gamma(1), delta(1), epsilon(1). F(0) has three main subunits: a(1), b(2) and c(10-14). The alpha and beta chains form an alternating ring which encloses part of the gamma chain. F(1) is attached to F(0) by a central stalk formed by the gamma and epsilon chains, while a peripheral stalk is formed by the delta and b chains.

The protein resides in the cell inner membrane. F(1)F(0) ATP synthase produces ATP from ADP in the presence of a proton or sodium gradient. F-type ATPases consist of two structural domains, F(1) containing the extramembraneous catalytic core and F(0) containing the membrane proton channel, linked together by a central stalk and a peripheral stalk. During catalysis, ATP synthesis in the catalytic domain of F(1) is coupled via a rotary mechanism of the central stalk subunits to proton translocation. In terms of biological role, key component of the F(0) channel; it plays a direct role in translocation across the membrane. A homomeric c-ring of between 10-14 subunits forms the central stalk rotor element with the F(1) delta and epsilon subunits. In Aliivibrio fischeri (strain ATCC 700601 / ES114) (Vibrio fischeri), this protein is ATP synthase subunit c.